A 460-amino-acid polypeptide reads, in one-letter code: Cyclin-T1-2 (460 aa).

2 disordered regions span residues M1 to A20 and Q285 to S345. Positions S314–R324 are enriched in basic and acidic residues. A compositionally biased stretch (polar residues) spans N332 to S345.

This sequence belongs to the cyclin family. Cyclin T subfamily.

This Arabidopsis thaliana (Mouse-ear cress) protein is Cyclin-T1-2 (CYCT1-2).